Consider the following 351-residue polypeptide: LETM1 domain-containing protein 1 (351 aa).

The Cytoplasmic portion of the chain corresponds to 1–130 (MLSGMALCRT…FRRDIIKAAP (130 aa)). The helical transmembrane segment at 131–151 (VVIISIPPFANYLVFVLMYFF) threads the bilayer. The Mitochondrial intermembrane portion of the chain corresponds to 152–351 (PRQLLIRHFW…SANYLQSIKQ (200 aa)). Residues 172 to 351 (IYHRMRVEAY…SANYLQSIKQ (180 aa)) enclose the Letm1 RBD domain.

The protein localises to the mitochondrion outer membrane. The protein resides in the nucleus. It is found in the mitochondrion inner membrane. May play an essential role for mitochondrial structure and function. This Xenopus tropicalis (Western clawed frog) protein is LETM1 domain-containing protein 1.